The chain runs to 705 residues: MAKHDLHLTRNIGIMAHIDAGKTTTSERILFYTGLTHKIGEVHDGAATMDWMEQEQERGITITSAATTTRWKYAGNTYKINLIDTPGHVDFTAEVERSLRVLDGAVAAYCAVGGVEPQSETVWRQADKYNVPRIGYVNKMDRSGADFFEVVRQMKDVLGANACPVVIPIGAEESFKGVVDLIKMKAILWHDETMGADYSVEEIPANLVDEANEWREKMLEKVAEFDDALMEKFFDDPSTITEEEILRALRAGTLKMDIVPMFCGSSFKNKGVQTLLDYVCAFLPSPLDTPAIVGTNPTTGAEEDRKPSEDEKTSALAFKIATDPYVGRLTFFRVYSGKVEAGSYIYNTRSGKKERVSRLFQMHSNKQNPVEVIGAGDIGAGVGFKDIRTGDTLCDEDAPIVLESMEFPDPVIGIAVEPKTQKDLDKLSNGLAKLAEEDPTFTVKTDEQSGQTIISGMGELHLDIIIDRLKREFKVECNQGKPQVNYKEAITKTVELREVYKKQSGGRGKFADIIVAIGPVDEDFTQGGLQFIDEVKGGNVPKEFIPSVQKGFQTAMKNGVLAGYPLDSLKVVLKDGSFHPVDSDQLSFEICAIQAYKNACAKAGPVLTEPIMKLEVVTPEENMGDVIGDLNKRRGQVEGMESSRSGARIVKAKVPLAEMFGYVTALRTITSGRATSSMTYDHHAQVSSSIAKAVLEEVKGRVDLV.

The tr-type G domain occupies 7 to 287 (HLTRNIGIMA…YVCAFLPSPL (281 aa)). Residues 16 to 23 (AHIDAGKT), 84 to 88 (DTPGH), and 138 to 141 (NKMD) contribute to the GTP site. Residues 293–312 (VGTNPTTGAEEDRKPSEDEK) are disordered. Residues 302-312 (EEDRKPSEDEK) show a composition bias toward basic and acidic residues.

Belongs to the TRAFAC class translation factor GTPase superfamily. Classic translation factor GTPase family. EF-G/EF-2 subfamily.

Its subcellular location is the cytoplasm. In terms of biological role, catalyzes the GTP-dependent ribosomal translocation step during translation elongation. During this step, the ribosome changes from the pre-translocational (PRE) to the post-translocational (POST) state as the newly formed A-site-bound peptidyl-tRNA and P-site-bound deacylated tRNA move to the P and E sites, respectively. Catalyzes the coordinated movement of the two tRNA molecules, the mRNA and conformational changes in the ribosome. The sequence is that of Elongation factor G from Phocaeicola vulgatus (strain ATCC 8482 / DSM 1447 / JCM 5826 / CCUG 4940 / NBRC 14291 / NCTC 11154) (Bacteroides vulgatus).